The following is a 542-amino-acid chain: Doublesex- and mab-3-related transcription factor A2 (542 aa).

The segment at residues 70-117 (CARCRNHGVVSALKGHKRYCRWKDCLCAKCTLIAERQRVMAAQVALRR) is a DNA-binding region (DM). The tract at residues 201-316 (LQAGRPGSPL…GGSGPRQRTP (116 aa)) is disordered. The DMA domain maps to 314–349 (RTPLDILTRVFPGHRRGVLELVLQGCGGDVVQAIEQ).

Belongs to the DMRT family. In terms of tissue distribution, expressed in testis.

It is found in the nucleus. Functionally, may be involved in sexual development. The protein is Doublesex- and mab-3-related transcription factor A2 (DMRTA2) of Homo sapiens (Human).